The following is a 926-amino-acid chain: Alpha-aminoadipic semialdehyde synthase, mitochondrial (926 aa).

Residues 1 to 27 constitute a mitochondrion transit peptide; it reads MLRAQRPRLARLRACLSRGLHHKPVMA. Residues 28 to 455 form a lysine-ketoglutarate reductase region; it reads LRREDVNAWE…DAVITSNGLL (428 aa). N6-acetyllysine is present on residues K48, K52, and K56. K93 is subject to N6-acetyllysine; alternate. K93 bears the N6-succinyllysine; alternate mark. K128 carries the N6-acetyllysine modification. An N6-acetyllysine; alternate modification is found at K138. K138 bears the N6-succinyllysine; alternate mark. An N6-succinyllysine modification is found at K274. At K286 the chain carries N6-acetyllysine; alternate. Position 286 is an N6-succinyllysine; alternate (K286). K333 carries the N6-succinyllysine modification. An N6-acetyllysine; alternate modification is found at K458. K458 is modified (N6-succinyllysine; alternate). The tract at residues 477-926 is saccharopine dehydrogenase; the sequence is MSTKKKVLVL…VFNTQSTIKL (450 aa). 3 residues coordinate NAD(+): S488, D512, and Q516. An N6-acetyllysine; alternate mark is found at K523 and K535. 2 positions are modified to N6-succinyllysine; alternate: K523 and K535. NAD(+) is bound by residues L554, A576, and S577. 577 to 578 is a binding site for L-saccharopine; sequence SY. Residue K584 is modified to N6-acetyllysine; alternate. K584 carries the post-translational modification N6-succinyllysine; alternate. 3 residues coordinate NAD(+): L603, D604, and P605. D604 contacts L-saccharopine. Residue R703 participates in L-saccharopine binding. K707 is subject to N6-acetyllysine. 724–726 provides a ligand contact to L-saccharopine; that stretch reads TLR. K732 is modified (N6-succinyllysine). K739 carries the N6-acetyllysine modification. K761 carries the post-translational modification N6-acetyllysine; alternate. Position 761 is an N6-succinyllysine; alternate (K761). 2 positions are modified to N6-acetyllysine: K778 and K780.

In the N-terminal section; belongs to the AlaDH/PNT family. It in the C-terminal section; belongs to the saccharopine dehydrogenase family. Homotetramer. In terms of tissue distribution, highly expressed in kidney and liver, very low expression is seen in heart, brain, spleen, lung, skeletal muscle and testis.

It localises to the mitochondrion. It catalyses the reaction L-saccharopine + NADP(+) + H2O = L-lysine + 2-oxoglutarate + NADPH + H(+). The enzyme catalyses L-saccharopine + NAD(+) + H2O = (S)-2-amino-6-oxohexanoate + L-glutamate + NADH + H(+). The protein operates within amino-acid degradation; L-lysine degradation via saccharopine pathway; glutaryl-CoA from L-lysine: step 1/6. Its pathway is amino-acid degradation; L-lysine degradation via saccharopine pathway; glutaryl-CoA from L-lysine: step 2/6. In terms of biological role, bifunctional enzyme that catalyzes the first two steps in lysine degradation. The sequence is that of Alpha-aminoadipic semialdehyde synthase, mitochondrial from Mus musculus (Mouse).